Reading from the N-terminus, the 419-residue chain is Carboxypeptidase A1 (419 aa).

The first 16 residues, 1-16 (MRGLLVLSVLLGAVFG), serve as a signal peptide directing secretion. A propeptide spans 17-110 (KEDFVGHQVL…QEQMFAFRSR (94 aa)) (activation peptide). The Peptidase M14 domain maps to 121–414 (TYHTLEEIYD…LALLTIMEHT (294 aa)). Residues His179 and Glu182 each contribute to the Zn(2+) site. Substrate-binding positions include 179-182 (HSRE), Arg237, and 254-255 (NR). A disulfide bridge links Cys248 with Cys271. Residue His306 coordinates Zn(2+). Substrate-binding positions include 307–308 (SY) and Tyr358. Glu380 serves as the catalytic Proton donor/acceptor.

The protein belongs to the peptidase M14 family. Monomer. May form a complex with proelastase 2. The cofactor is Zn(2+).

It localises to the secreted. It catalyses the reaction Release of a C-terminal amino acid, but little or no action with -Asp, -Glu, -Arg, -Lys or -Pro.. The catalysed reaction is leukotriene C4 + H2O = leukotriene F4 + glycine. Inhibited by interaction with the S.magnifica carboxypeptidase inhibitor SmCI. Carboxypeptidase that catalyzes the release of a C-terminal amino acid, but has little or no action with -Asp, -Glu, -Arg, -Lys or -Pro. Catalyzes the conversion of leukotriene C4 to leukotriene F4 via the hydrolysis of an amide bond. In Homo sapiens (Human), this protein is Carboxypeptidase A1.